We begin with the raw amino-acid sequence, 467 residues long: Serine/threonine-protein phosphatase 2A 56 kDa regulatory subunit epsilon isoform (467 aa).

A disordered region spans residues Met1–Gly40. Ser2 bears the N-acetylserine mark. The residue at position 7 (Thr7) is a Phosphothreonine. A compositionally biased stretch (basic residues) spans Lys20–Arg29. Residues Ser30, Ser32, and Ser34 each carry the phosphoserine modification. Residues Ser30–Gly40 show a composition bias toward low complexity.

This sequence belongs to the phosphatase 2A regulatory subunit B56 family. As to quaternary structure, found in a complex with at least ARL2, PPP2CB; PPP2R1A, PPP2R2A, PPP2R5E and TBCD. PP2A consists of a common heterodimeric core enzyme, composed of a 36 kDa catalytic subunit (subunit C) and a 65 kDa constant regulatory subunit (PR65 or subunit A), that associates with a variety of regulatory subunits. Proteins that associate with the core dimer include three families of regulatory subunits B (the R2/B/PR55/B55, R3/B''/PR72/PR130/PR59 and R5/B'/B56 families), the 48 kDa variable regulatory subunit, viral proteins, and cell signaling molecules. Interacts with SGO1. Phosphorylated on serine residues.

The protein localises to the cytoplasm. Its function is as follows. The B regulatory subunit might modulate substrate selectivity and catalytic activity, and might also direct the localization of the catalytic enzyme to a particular subcellular compartment. The polypeptide is Serine/threonine-protein phosphatase 2A 56 kDa regulatory subunit epsilon isoform (PPP2R5E) (Homo sapiens (Human)).